Consider the following 90-residue polypeptide: Interferon alpha-inducible protein 27-like protein 2A (90 aa).

An N-terminal signal peptide occupies residues 1–24 (MLGTLFGSAIGGALAVAGAPVALA). 2 helical membrane passes run 28–48 (FTGTGIAAASIAAKMMSAAAI) and 67–89 (GVLGLSTSTNAILGAAGAAVGAL).

It belongs to the IFI6/IFI27 family. Homodimer. Interacts with SKP2. Interacts with NR4A1. May interact with BCL2.

The protein resides in the nucleus inner membrane. Its function is as follows. May be involved in the interferon-induced negative regulation of the transcriptional activity of NR4A1, NR4A2 and NR4A3 through the enhancement of XPO1-mediated nuclear export of these nuclear receptors. Through the regulation of NR4A1 transcriptional activity, may play a role in the vascular response to injury. The protein is Interferon alpha-inducible protein 27-like protein 2A of Mus musculus (Mouse).